Here is a 556-residue protein sequence, read N- to C-terminus: Formate--tetrahydrofolate ligase (556 aa).

65–72 (TPAGEGKT) lines the ATP pocket.

Belongs to the formate--tetrahydrofolate ligase family.

The catalysed reaction is (6S)-5,6,7,8-tetrahydrofolate + formate + ATP = (6R)-10-formyltetrahydrofolate + ADP + phosphate. Its pathway is one-carbon metabolism; tetrahydrofolate interconversion. This chain is Formate--tetrahydrofolate ligase, found in Clostridium cylindrosporum.